The following is a 191-amino-acid chain: UPF0149 protein plu3602 (191 aa).

This sequence belongs to the UPF0149 family.

The polypeptide is UPF0149 protein plu3602 (Photorhabdus laumondii subsp. laumondii (strain DSM 15139 / CIP 105565 / TT01) (Photorhabdus luminescens subsp. laumondii)).